The sequence spans 186 residues: Ribosome-recycling factor (186 aa).

The segment at 135–162 (DGMDGLKKAEKDGDIGQDESRAQSERVQ) is disordered.

This sequence belongs to the RRF family.

It is found in the cytoplasm. Its function is as follows. Responsible for the release of ribosomes from messenger RNA at the termination of protein biosynthesis. May increase the efficiency of translation by recycling ribosomes from one round of translation to another. The protein is Ribosome-recycling factor of Sinorhizobium fredii (strain NBRC 101917 / NGR234).